Consider the following 297-residue polypeptide: Tyrosine recombinase XerD (297 aa).

The Core-binding (CB) domain maps to 1 to 86; that stretch reads MNDLIEDFLH…SLRSFFHYLM (86 aa). One can recognise a Tyr recombinase domain in the interval 107-291; it reads GLPKVLNLDD…TKLRLKDVYK (185 aa). Residues arginine 147, lysine 171, histidine 243, arginine 246, and histidine 269 contribute to the active site. Tyrosine 278 (O-(3'-phospho-DNA)-tyrosine intermediate) is an active-site residue.

Belongs to the 'phage' integrase family. XerD subfamily. As to quaternary structure, forms a cyclic heterotetrameric complex composed of two molecules of XerC and two molecules of XerD.

It localises to the cytoplasm. Its function is as follows. Site-specific tyrosine recombinase, which acts by catalyzing the cutting and rejoining of the recombining DNA molecules. The XerC-XerD complex is essential to convert dimers of the bacterial chromosome into monomers to permit their segregation at cell division. It also contributes to the segregational stability of plasmids. The chain is Tyrosine recombinase XerD from Listeria monocytogenes serovar 1/2a (strain ATCC BAA-679 / EGD-e).